We begin with the raw amino-acid sequence, 218 residues long: MDPNMNNLLKWGIQNSTATQQTSDSNNNASQAPRSNITPEMLSALFGGPSEADLMKAAMEALRSDEVDLENKLIAFDNFEQLIESIDNANNLEPLGLWTPLVELLKHEEPDMRRMAAWCIGTAVQNNEKAQDKLIVMNAIPTLVSMSTQDPVPAVRKKAVYALSSAVRNYQPGTNELVKHLPGGYASGKVDAADMDTIDMIMDKLRAHPVSSSPPSAA.

ARM repeat units follow at residues 26–67 (NNNA…SDEV), 86–125 (IDNA…TAVQ), and 128–168 (EKAQ…SAVR).

This sequence belongs to the FES1 family.

The protein resides in the cytoplasm. In terms of biological role, functions as a nucleotide exchange factor (NEF) for Hsp70 chaperones which accelerates the release of ADP. Required for fully efficient Hsp70-mediated folding of proteins. This Emericella nidulans (strain FGSC A4 / ATCC 38163 / CBS 112.46 / NRRL 194 / M139) (Aspergillus nidulans) protein is Hsp70 nucleotide exchange factor fes1 (fes1).